The following is a 98-amino-acid chain: NADH-ubiquinone oxidoreductase chain 4L (98 aa).

Helical transmembrane passes span 2 to 22 (PSISININLAFATALLGMLMF), 29 to 49 (SLLCLEGMMLSMFILSTLTIL), and 61 to 81 (ILLLVFAACEAAIGLALLVMV).

This sequence belongs to the complex I subunit 4L family. As to quaternary structure, core subunit of respiratory chain NADH dehydrogenase (Complex I) which is composed of 45 different subunits.

Its subcellular location is the mitochondrion inner membrane. The enzyme catalyses a ubiquinone + NADH + 5 H(+)(in) = a ubiquinol + NAD(+) + 4 H(+)(out). Core subunit of the mitochondrial membrane respiratory chain NADH dehydrogenase (Complex I) which catalyzes electron transfer from NADH through the respiratory chain, using ubiquinone as an electron acceptor. Part of the enzyme membrane arm which is embedded in the lipid bilayer and involved in proton translocation. The sequence is that of NADH-ubiquinone oxidoreductase chain 4L (MT-ND4L) from Microcebus simmonsi (Simmons's mouse lemur).